The following is a 92-amino-acid chain: Pyrimidine/purine nucleoside phosphorylase (92 aa).

The protein belongs to the nucleoside phosphorylase PpnP family.

It catalyses the reaction a purine D-ribonucleoside + phosphate = a purine nucleobase + alpha-D-ribose 1-phosphate. The catalysed reaction is adenosine + phosphate = alpha-D-ribose 1-phosphate + adenine. The enzyme catalyses cytidine + phosphate = cytosine + alpha-D-ribose 1-phosphate. It carries out the reaction guanosine + phosphate = alpha-D-ribose 1-phosphate + guanine. It catalyses the reaction inosine + phosphate = alpha-D-ribose 1-phosphate + hypoxanthine. The catalysed reaction is thymidine + phosphate = 2-deoxy-alpha-D-ribose 1-phosphate + thymine. The enzyme catalyses uridine + phosphate = alpha-D-ribose 1-phosphate + uracil. It carries out the reaction xanthosine + phosphate = alpha-D-ribose 1-phosphate + xanthine. Its function is as follows. Catalyzes the phosphorolysis of diverse nucleosides, yielding D-ribose 1-phosphate and the respective free bases. Can use uridine, adenosine, guanosine, cytidine, thymidine, inosine and xanthosine as substrates. Also catalyzes the reverse reactions. This is Pyrimidine/purine nucleoside phosphorylase from Rhodopirellula baltica (strain DSM 10527 / NCIMB 13988 / SH1).